Here is a 532-residue protein sequence, read N- to C-terminus: uncharacterized protein (532 aa).

A run of 6 helical transmembrane segments spans residues 7-26 (HSSY…LGRI), 30-52 (GLSL…GVII), 59-77 (FGLV…PGFF), 87-109 (LILI…KYAF), 116-134 (VVGL…AVAI), and 139-161 (SPLA…ILFV). 2 RCK C-terminal domains span residues 179-262 (LEIE…LIGE) and 263-346 (REEG…LLGN). Transmembrane regions (helical) follow at residues 356–376 (FFPI…NISF), 386–408 (LTGG…PIIW), 421–440 (LGLL…NLVA), 445–467 (SGLL…AVIV), 474–496 (INIL…LAAA), and 506–528 (SVAY…QVIS).

Belongs to the AAE transporter (TC 2.A.81) family.

The protein resides in the cell membrane. This is an uncharacterized protein from Bacteroides thetaiotaomicron (strain ATCC 29148 / DSM 2079 / JCM 5827 / CCUG 10774 / NCTC 10582 / VPI-5482 / E50).